We begin with the raw amino-acid sequence, 312 residues long: Light-independent protochlorophyllide reductase iron-sulfur ATP-binding protein (312 aa).

ATP-binding positions include 55 to 60 (GIGKST) and K84. S59 lines the Mg(2+) pocket. C140 and C174 together coordinate [4Fe-4S] cluster. ATP-binding positions include 225-226 (NR) and 249-251 (PDL).

The protein belongs to the NifH/BchL/ChlL family. Homodimer. Protochlorophyllide reductase is composed of three subunits; BchL, BchN and BchB. Requires [4Fe-4S] cluster as cofactor.

The enzyme catalyses chlorophyllide a + oxidized 2[4Fe-4S]-[ferredoxin] + 2 ADP + 2 phosphate = protochlorophyllide a + reduced 2[4Fe-4S]-[ferredoxin] + 2 ATP + 2 H2O. The protein operates within porphyrin-containing compound metabolism; bacteriochlorophyll biosynthesis (light-independent). Functionally, component of the dark-operative protochlorophyllide reductase (DPOR) that uses Mg-ATP and reduced ferredoxin to reduce ring D of protochlorophyllide (Pchlide) to form chlorophyllide a (Chlide). This reaction is light-independent. The L component serves as a unique electron donor to the NB-component of the complex, and binds Mg-ATP. The sequence is that of Light-independent protochlorophyllide reductase iron-sulfur ATP-binding protein from Rhodopseudomonas palustris (strain HaA2).